The following is a 190-amino-acid chain: Adenylate kinase (190 aa).

12 to 17 (GSGKTT) contributes to the ATP binding site. Residues 34 to 63 (STGDLLREEVASGSEYGKTIDSFISKGNLV) are NMP. AMP is bound by residues Thr35, Arg40, 61-63 (NLV), 88-91 (GYPR), and Gln95. An LID region spans residues 130-136 (GRARGAD). Arg131 contributes to the ATP binding site. AMP is bound by residues Arg133 and Arg145. An ATP-binding site is contributed by Arg173.

This sequence belongs to the adenylate kinase family. In terms of assembly, monomer.

The protein resides in the cytoplasm. It catalyses the reaction AMP + ATP = 2 ADP. It participates in purine metabolism; AMP biosynthesis via salvage pathway; AMP from ADP: step 1/1. In terms of biological role, catalyzes the reversible transfer of the terminal phosphate group between ATP and AMP. Plays an important role in cellular energy homeostasis and in adenine nucleotide metabolism. In Helicobacter hepaticus (strain ATCC 51449 / 3B1), this protein is Adenylate kinase.